A 142-amino-acid chain; its full sequence is Glia maturation factor beta (142 aa).

The residue at position 2 (Ser2) is an N-acetylserine. An ADF-H domain is found at 4-139 (SLVVCDVAED…TEEWLREKLG (136 aa)).

This sequence belongs to the actin-binding proteins ADF family. GMF subfamily. In terms of processing, phosphorylated; stimulated by phorbol ester.

In terms of biological role, this protein causes differentiation of brain cells, stimulation of neural regeneration, and inhibition of proliferation of tumor cells. The chain is Glia maturation factor beta (Gmfb) from Mus musculus (Mouse).